The primary structure comprises 340 residues: Ketol-acid reductoisomerase (NADP(+)) (340 aa).

Residues 3–183 (LPIYYDKDCD…GGGRTGIIHT (181 aa)) form the KARI N-terminal Rossmann domain. Residues 26-29 (FGSQ), Ser54, and 84-87 (DEIQ) each bind NADP(+). The active site involves His109. Gly135 is a binding site for NADP(+). Residues 184-329 (TFKDETETDL…KRLRAMMPWI (146 aa)) enclose the KARI C-terminal knotted domain. Residues Asp192, Glu196, Glu228, and Glu232 each contribute to the Mg(2+) site. Ser253 contributes to the substrate binding site.

This sequence belongs to the ketol-acid reductoisomerase family. Mg(2+) serves as cofactor.

It carries out the reaction (2R)-2,3-dihydroxy-3-methylbutanoate + NADP(+) = (2S)-2-acetolactate + NADPH + H(+). The enzyme catalyses (2R,3R)-2,3-dihydroxy-3-methylpentanoate + NADP(+) = (S)-2-ethyl-2-hydroxy-3-oxobutanoate + NADPH + H(+). Its pathway is amino-acid biosynthesis; L-isoleucine biosynthesis; L-isoleucine from 2-oxobutanoate: step 2/4. It participates in amino-acid biosynthesis; L-valine biosynthesis; L-valine from pyruvate: step 2/4. Involved in the biosynthesis of branched-chain amino acids (BCAA). Catalyzes an alkyl-migration followed by a ketol-acid reduction of (S)-2-acetolactate (S2AL) to yield (R)-2,3-dihydroxy-isovalerate. In the isomerase reaction, S2AL is rearranged via a Mg-dependent methyl migration to produce 3-hydroxy-3-methyl-2-ketobutyrate (HMKB). In the reductase reaction, this 2-ketoacid undergoes a metal-dependent reduction by NADPH to yield (R)-2,3-dihydroxy-isovalerate. The sequence is that of Ketol-acid reductoisomerase (NADP(+)) from Nitratiruptor sp. (strain SB155-2).